The primary structure comprises 531 residues: Na(+)/H(+) antiporter NhaB (531 aa).

A run of 11 helical transmembrane segments spans residues 23 to 45, 66 to 86, 97 to 117, 130 to 164, 206 to 226, 244 to 264, 307 to 327, 352 to 372, 393 to 413, 451 to 471, and 478 to 498; these read IAIL…VAGW, PGGL…SQVL, LLLI…LFVF, VSLM…FYSI, LLMH…VGEP, LRMG…CFLV, AFVG…VGLI, EEAL…GVII, LVIF…VFVG, ATPN…APLI, and MVWM…LAIE.

Belongs to the NhaB Na(+)/H(+) (TC 2.A.34) antiporter family.

It is found in the cell inner membrane. It catalyses the reaction 2 Na(+)(in) + 3 H(+)(out) = 2 Na(+)(out) + 3 H(+)(in). Its function is as follows. Na(+)/H(+) antiporter that extrudes sodium in exchange for external protons. The polypeptide is Na(+)/H(+) antiporter NhaB (Shewanella loihica (strain ATCC BAA-1088 / PV-4)).